Here is a 690-residue protein sequence, read N- to C-terminus: Elongation factor G (690 aa).

Residues 8 to 283 (SKCRNIGIMA…AVVDFLPAPN (276 aa)) enclose the tr-type G domain. GTP-binding positions include 17–24 (AHIDAGKT), 81–85 (DTPGH), and 135–138 (NKMD).

This sequence belongs to the TRAFAC class translation factor GTPase superfamily. Classic translation factor GTPase family. EF-G/EF-2 subfamily.

It localises to the cytoplasm. In terms of biological role, catalyzes the GTP-dependent ribosomal translocation step during translation elongation. During this step, the ribosome changes from the pre-translocational (PRE) to the post-translocational (POST) state as the newly formed A-site-bound peptidyl-tRNA and P-site-bound deacylated tRNA move to the P and E sites, respectively. Catalyzes the coordinated movement of the two tRNA molecules, the mRNA and conformational changes in the ribosome. The chain is Elongation factor G from Ehrlichia canis (strain Jake).